The chain runs to 208 residues: Uracil phosphoribosyltransferase (208 aa).

Residues Arg78, Arg103, and 130–138 (DPMLATGGS) each bind 5-phospho-alpha-D-ribose 1-diphosphate. Uracil contacts are provided by residues Ile193 and 198–200 (GDA). Asp199 provides a ligand contact to 5-phospho-alpha-D-ribose 1-diphosphate.

It belongs to the UPRTase family. The cofactor is Mg(2+).

The enzyme catalyses UMP + diphosphate = 5-phospho-alpha-D-ribose 1-diphosphate + uracil. It functions in the pathway pyrimidine metabolism; UMP biosynthesis via salvage pathway; UMP from uracil: step 1/1. Allosterically activated by GTP. Catalyzes the conversion of uracil and 5-phospho-alpha-D-ribose 1-diphosphate (PRPP) to UMP and diphosphate. In Photorhabdus laumondii subsp. laumondii (strain DSM 15139 / CIP 105565 / TT01) (Photorhabdus luminescens subsp. laumondii), this protein is Uracil phosphoribosyltransferase.